The chain runs to 368 residues: Probable endopolygalacturonase A (368 aa).

A signal peptide spans 1–18 (MRSVELLSLAALGSLVAA). A propeptide spanning residues 19 to 31 (APAPSRVSDLTKR) is cleaved from the precursor. Cys35 and Cys50 are joined by a disulfide. PbH1 repeat units lie at residues 140-162 (LEDSTITGLSIKNTPVQAISVQA), 167-192 (LIDITIDNSDGDDNGGHNTDGFDISE), 193-214 (STGVYIRGATVKNQDDCIAINS), 215-235 (GENIEFSGGTCSGGHGLSIGS), 244-265 (VKNVTITDSTVTDSANGVRIKT), 273-295 (VSEVTYSNIKLSGITDYGIVIEQ), and 307-352 (TTGV…DITG). Catalysis depends on Asp207, which acts as the Proton donor. Cys209 and Cys225 form a disulfide bridge. Residue His229 is part of the active site. Asn246 carries an N-linked (GlcNAc...) asparagine glycan. Disulfide bonds link Cys335–Cys340 and Cys359–Cys368.

It belongs to the glycosyl hydrolase 28 family.

Its subcellular location is the secreted. The enzyme catalyses (1,4-alpha-D-galacturonosyl)n+m + H2O = (1,4-alpha-D-galacturonosyl)n + (1,4-alpha-D-galacturonosyl)m.. Involved in maceration and soft-rotting of plant tissue. Hydrolyzes the 1,4-alpha glycosidic bonds of de-esterified pectate in the smooth region of the plant cell wall. The protein is Probable endopolygalacturonase A (pgaA) of Neosartorya fischeri (strain ATCC 1020 / DSM 3700 / CBS 544.65 / FGSC A1164 / JCM 1740 / NRRL 181 / WB 181) (Aspergillus fischerianus).